The sequence spans 409 residues: MKYSIDDLIFSKDIDEDLYCQLCCNLMNESVSCPNGHCLCKGCFHKQIETVKSECPICCIPVTIQTLCKNIYLQKHINNLKVYCPNSFLNNDNNKLILDEKKGCKEILTIEQLKNGKHLKECKFTFVSCEYNEKCGKYRMNEIENHQDQCNYYPTKCFYCKNDFERMNLSNHLLLDCPLVIIGCRYKDGGCNETFPRHELSKHLALEDNHQQYISNIINGHQSLLKSTSKQLKQLRSSCEELETKLINNDYSFNGRWIIKQFSAHFDLFKENPFTNLIISPPIFLTPTKEFSLSLSADTVVNSVNCISVILSKQFQSSSTIKFSFEITNQSQTKSIKKEEKKKFSHLIGSSHSIEFPTSEIYNIHNKFIVNDQLIIKFNIKILSIQDEQQEIEESEENFNNTLITELEE.

The segment at Cys20–Cys59 adopts an RING-type; degenerate zinc-finger fold. 2 consecutive TRAF-type zinc fingers follow at residues Lys75–Asn145 and Asn145–Ser201. A coiled-coil region spans residues His221 to Asp250. Residues Ser252–Ile380 enclose the MATH domain.

The protein belongs to the TNF receptor-associated factor family. A subfamily.

The protein localises to the cytoplasm. Its function is as follows. Probable adapter protein and signal transducer that links members of the tumor necrosis factor receptor family to different signaling pathways by association with the receptor cytoplasmic domain and kinases. This Dictyostelium discoideum (Social amoeba) protein is TNF receptor-associated factor family protein DDB_G0273435/DDB_G0273505.